A 424-amino-acid polypeptide reads, in one-letter code: Methylthioribose-1-phosphate isomerase (424 aa).

The active-site Proton donor is D281.

The protein belongs to the eIF-2B alpha/beta/delta subunits family. MtnA subfamily.

The protein localises to the cytoplasm. The protein resides in the nucleus. The catalysed reaction is 5-(methylsulfanyl)-alpha-D-ribose 1-phosphate = 5-(methylsulfanyl)-D-ribulose 1-phosphate. The protein operates within amino-acid biosynthesis; L-methionine biosynthesis via salvage pathway; L-methionine from S-methyl-5-thio-alpha-D-ribose 1-phosphate: step 1/6. Functionally, catalyzes the interconversion of methylthioribose-1-phosphate (MTR-1-P) into methylthioribulose-1-phosphate (MTRu-1-P). The sequence is that of Methylthioribose-1-phosphate isomerase from Candida dubliniensis (strain CD36 / ATCC MYA-646 / CBS 7987 / NCPF 3949 / NRRL Y-17841) (Yeast).